Consider the following 364-residue polypeptide: Aminomethyltransferase (364 aa).

It belongs to the GcvT family. In terms of assembly, the glycine cleavage system is composed of four proteins: P, T, L and H.

It catalyses the reaction N(6)-[(R)-S(8)-aminomethyldihydrolipoyl]-L-lysyl-[protein] + (6S)-5,6,7,8-tetrahydrofolate = N(6)-[(R)-dihydrolipoyl]-L-lysyl-[protein] + (6R)-5,10-methylene-5,6,7,8-tetrahydrofolate + NH4(+). Functionally, the glycine cleavage system catalyzes the degradation of glycine. The protein is Aminomethyltransferase of Geobacillus sp. (strain WCH70).